The following is a 133-amino-acid chain: ATP synthase epsilon chain (133 aa).

It belongs to the ATPase epsilon chain family. In terms of assembly, F-type ATPases have 2 components, CF(1) - the catalytic core - and CF(0) - the membrane proton channel. CF(1) has five subunits: alpha(3), beta(3), gamma(1), delta(1), epsilon(1). CF(0) has three main subunits: a, b and c.

It is found in the cell membrane. Functionally, produces ATP from ADP in the presence of a proton gradient across the membrane. This is ATP synthase epsilon chain from Bacillus mycoides (strain KBAB4) (Bacillus weihenstephanensis).